Consider the following 103-residue polypeptide: SOSS complex subunit C (103 aa).

This sequence belongs to the SOSS-C family. Belongs to the multiprotein complex Integrator. Component of the SOSS complex, composed of SOSS-B (SOSS-B1/NABP2 or SOSS-B2/NABP1), SOSS-A/INTS3 and SOSS-C/INIP.

It localises to the nucleus. In terms of biological role, component of the SOSS complex, a multiprotein complex that functions downstream of the MRN complex to promote DNA repair and G2/M checkpoint. The SOSS complex associates with single-stranded DNA at DNA lesions and influences diverse endpoints in the cellular DNA damage response including cell-cycle checkpoint activation, recombinational repair and maintenance of genomic stability. Required for efficient homologous recombination-dependent repair of double-strand breaks (DSBs). In Gallus gallus (Chicken), this protein is SOSS complex subunit C (INIP).